Consider the following 415-residue polypeptide: Histidine--tRNA ligase (415 aa).

This sequence belongs to the class-II aminoacyl-tRNA synthetase family. As to quaternary structure, homodimer.

The protein resides in the cytoplasm. It carries out the reaction tRNA(His) + L-histidine + ATP = L-histidyl-tRNA(His) + AMP + diphosphate + H(+). The protein is Histidine--tRNA ligase of Rhodospirillum rubrum (strain ATCC 11170 / ATH 1.1.1 / DSM 467 / LMG 4362 / NCIMB 8255 / S1).